The following is a 183-amino-acid chain: Small ribosomal subunit protein uS4c (183 aa).

In terms of domain architecture, S4 RNA-binding spans 82–143 (MRLDNILFRL…KQRSKALIQN (62 aa)).

This sequence belongs to the universal ribosomal protein uS4 family. In terms of assembly, part of the 30S ribosomal subunit. Contacts protein S5. The interaction surface between S4 and S5 is involved in control of translational fidelity.

The protein localises to the plastid. It localises to the chloroplast. One of the primary rRNA binding proteins, it binds directly to 16S rRNA where it nucleates assembly of the body of the 30S subunit. Its function is as follows. With S5 and S12 plays an important role in translational accuracy. This Crocosmia sp. (strain Porto Alegre 034) protein is Small ribosomal subunit protein uS4c (rps4).